The sequence spans 742 residues: 5-methyltetrahydropteroyltriglutamate--homocysteine methyltransferase (742 aa).

Residues 18 to 21 and K112 each bind 5-methyltetrahydropteroyltri-L-glutamate; that span reads REWK. L-homocysteine is bound by residues 420–422 and E473; that span reads IGS. L-methionine-binding positions include 420-422 and E473; that span reads IGS. Residue W550 participates in 5-methyltetrahydropteroyltri-L-glutamate binding. D588 provides a ligand contact to L-homocysteine. D588 serves as a coordination point for L-methionine. E594 lines the 5-methyltetrahydropteroyltri-L-glutamate pocket. Residues H630, C632, and E654 each coordinate Zn(2+). The active-site Proton donor is H683. C715 is a binding site for Zn(2+).

It belongs to the vitamin-B12 independent methionine synthase family. Zn(2+) is required as a cofactor.

It catalyses the reaction 5-methyltetrahydropteroyltri-L-glutamate + L-homocysteine = tetrahydropteroyltri-L-glutamate + L-methionine. It participates in amino-acid biosynthesis; L-methionine biosynthesis via de novo pathway; L-methionine from L-homocysteine (MetE route): step 1/1. Functionally, catalyzes the transfer of a methyl group from 5-methyltetrahydrofolate to homocysteine resulting in methionine formation. The chain is 5-methyltetrahydropteroyltriglutamate--homocysteine methyltransferase from Staphylococcus aureus (strain JH9).